A 363-amino-acid chain; its full sequence is 3-dehydroquinate synthase (363 aa).

NAD(+) is bound by residues 107–111, 131–132, K144, and K153; these read GVIGD and TT. The Zn(2+) site is built by E186, H251, and H268.

The protein belongs to the sugar phosphate cyclases superfamily. Dehydroquinate synthase family. The cofactor is NAD(+). Requires Co(2+) as cofactor. Zn(2+) is required as a cofactor.

Its subcellular location is the cytoplasm. The catalysed reaction is 7-phospho-2-dehydro-3-deoxy-D-arabino-heptonate = 3-dehydroquinate + phosphate. It participates in metabolic intermediate biosynthesis; chorismate biosynthesis; chorismate from D-erythrose 4-phosphate and phosphoenolpyruvate: step 2/7. Its function is as follows. Catalyzes the conversion of 3-deoxy-D-arabino-heptulosonate 7-phosphate (DAHP) to dehydroquinate (DHQ). This is 3-dehydroquinate synthase from Nostoc sp. (strain PCC 7120 / SAG 25.82 / UTEX 2576).